The following is a 197-amino-acid chain: Imidazoleglycerol-phosphate dehydratase (197 aa).

This sequence belongs to the imidazoleglycerol-phosphate dehydratase family.

The protein resides in the cytoplasm. The enzyme catalyses D-erythro-1-(imidazol-4-yl)glycerol 3-phosphate = 3-(imidazol-4-yl)-2-oxopropyl phosphate + H2O. It participates in amino-acid biosynthesis; L-histidine biosynthesis; L-histidine from 5-phospho-alpha-D-ribose 1-diphosphate: step 6/9. The chain is Imidazoleglycerol-phosphate dehydratase from Pseudomonas syringae pv. syringae (strain B728a).